A 253-amino-acid chain; its full sequence is 4-phosphopantoate--beta-alanine ligase (253 aa).

Residues R17, R39, 179-181, 185-186, and 197-198 each bind ATP; these read DLN, RT, and NL.

This sequence belongs to the archaeal phosphopantothenate synthetase family. As to quaternary structure, homodimer.

It carries out the reaction (R)-4-phosphopantoate + beta-alanine + ATP = (R)-4'-phosphopantothenate + AMP + diphosphate + H(+). It functions in the pathway cofactor biosynthesis; coenzyme A biosynthesis. Its function is as follows. Catalyzes the condensation of (R)-4-phosphopantoate and beta-alanine to 4'-phosphopantothenate in the CoA biosynthesis pathway. This chain is 4-phosphopantoate--beta-alanine ligase, found in Methanosarcina mazei (strain ATCC BAA-159 / DSM 3647 / Goe1 / Go1 / JCM 11833 / OCM 88) (Methanosarcina frisia).